A 308-amino-acid chain; its full sequence is Very-long-chain enoyl-CoA reductase (308 aa).

Topologically, residues 1–86 are cytoplasmic; that stretch reads MKHYEVEIRD…YFRDLGAQIS (86 aa). Lysine 22 bears the N6-acetyllysine mark. The residue at position 58 (serine 58) is a Phosphoserine. Lysine 60 carries the post-translational modification N6-acetyllysine. A helical membrane pass occupies residues 87 to 106; sequence WVTVFLTEYAGPLFIYLLFY. The Lumenal portion of the chain corresponds to 107–124; it reads FRVPFIYGRKYDFTSSRH. The chain crosses the membrane as a helical span at residues 125-147; sequence TVVHLACMCHSFHYIKRLLETLF. Residues 148–158 lie on the Cytoplasmic side of the membrane; it reads VHRFSHGTMPL. A helical membrane pass occupies residues 159–180; it reads RNIFKNCTYYWGFAAWMAYYIN. At 181-189 the chain is on the lumenal side; it reads HPLYTPPTY. A helical transmembrane segment spans residues 190-216; it reads GVQQVKLALAVFVICQLGNFSIHMALR. The Cytoplasmic segment spans residues 217–245; it reads DLRPAGSKTRKIPYPTKNPFTWLFLLVSC. A helical membrane pass occupies residues 246–262; that stretch reads PNYTYEVGSWIGFAILT. Over 263–264 the chain is Lumenal; sequence QC. The chain crosses the membrane as a helical span at residues 265–292; that stretch reads VPVALFSLVGFTQMTIWAKGKHRSYLKE. The Cytoplasmic portion of the chain corresponds to 293-308; sequence FRDYPPLRMPIIPFLL.

It belongs to the steroid 5-alpha reductase family. In terms of assembly, interacts with ELOVL1 and LASS2. In terms of processing, glycosylated.

The protein localises to the endoplasmic reticulum membrane. The enzyme catalyses a very-long-chain 2,3-saturated fatty acyl-CoA + NADP(+) = a very-long-chain (2E)-enoyl-CoA + NADPH + H(+). The catalysed reaction is octadecanoyl-CoA + NADP(+) = (2E)-octadecenoyl-CoA + NADPH + H(+). It carries out the reaction (2E,7Z,10Z,13Z,16Z)-docosapentaenoyl-CoA + NADPH + H(+) = (7Z,10Z,13Z,16Z)-docosatetraenoyl-CoA + NADP(+). It catalyses the reaction (2E,7Z,10Z,13Z,16Z,19Z)-docosahexaenoyl-CoA + NADPH + H(+) = (7Z,10Z,13Z,16Z,19Z)-docosapentaenoyl-CoA + NADP(+). The enzyme catalyses (2E,8Z,11Z,14Z)-eicosatetraenoyl-CoA + NADPH + H(+) = (8Z,11Z,14Z)-eicosatrienoyl-CoA + NADP(+). The catalysed reaction is (2E)-hexadecenoyl-CoA + NADPH + H(+) = hexadecanoyl-CoA + NADP(+). The protein operates within lipid metabolism; fatty acid biosynthesis. Its pathway is lipid metabolism; sphingolipid metabolism. Its function is as follows. Involved in both the production of very long-chain fatty acids for sphingolipid synthesis and the degradation of the sphingosine moiety in sphingolipids through the sphingosine 1-phosphate metabolic pathway. Catalyzes the last of the four reactions of the long-chain fatty acids elongation cycle. This endoplasmic reticulum-bound enzymatic process, allows the addition of 2 carbons to the chain of long- and very long-chain fatty acids/VLCFAs per cycle. This enzyme reduces the trans-2,3-enoyl-CoA fatty acid intermediate to an acyl-CoA that can be further elongated by entering a new cycle of elongation. Thereby, it participates in the production of VLCFAs of different chain lengths that are involved in multiple biological processes as precursors of membrane lipids and lipid mediators. Catalyzes the saturation step of the sphingosine 1-phosphate metabolic pathway, the conversion of trans-2-hexadecenoyl-CoA to palmitoyl-CoA. The chain is Very-long-chain enoyl-CoA reductase (Tecr) from Mus musculus (Mouse).